Reading from the N-terminus, the 237-residue chain is Class B acid phosphatase (237 aa).

An N-terminal signal peptide occupies residues M1 to A25. The active-site Nucleophile is the D69. D69 and D71 together coordinate Mg(2+). The active-site Proton donor is D71. Substrate contacts are provided by residues T137–G138 and K177. Mg(2+) is bound at residue D192.

Belongs to the class B bacterial acid phosphatase family. As to quaternary structure, homotetramer. Mg(2+) serves as cofactor.

Its subcellular location is the periplasm. It carries out the reaction a phosphate monoester + H2O = an alcohol + phosphate. Functionally, dephosphorylates several organic phosphate monoesters. Also has a phosphotransferase activity catalyzing the transfer of low-energy phosphate groups from organic phosphate monoesters to free hydroxyl groups of various organic compounds. This Klebsiella pneumoniae (strain 342) protein is Class B acid phosphatase.